We begin with the raw amino-acid sequence, 925 residues long: Protein translocase subunit SecA (925 aa).

Residues glutamine 87, 105–109, and aspartate 515 contribute to the ATP site; that span reads GEGKT. Zn(2+)-binding residues include cysteine 909, cysteine 911, cysteine 920, and histidine 921.

Belongs to the SecA family. Monomer and homodimer. Part of the essential Sec protein translocation apparatus which comprises SecA, SecYEG and auxiliary proteins SecDF-YajC and YidC. The cofactor is Zn(2+).

The protein localises to the cell inner membrane. Its subcellular location is the cytoplasm. It carries out the reaction ATP + H2O + cellular proteinSide 1 = ADP + phosphate + cellular proteinSide 2.. Its function is as follows. Part of the Sec protein translocase complex. Interacts with the SecYEG preprotein conducting channel. Has a central role in coupling the hydrolysis of ATP to the transfer of proteins into and across the cell membrane, serving both as a receptor for the preprotein-SecB complex and as an ATP-driven molecular motor driving the stepwise translocation of polypeptide chains across the membrane. The protein is Protein translocase subunit SecA of Cupriavidus taiwanensis (strain DSM 17343 / BCRC 17206 / CCUG 44338 / CIP 107171 / LMG 19424 / R1) (Ralstonia taiwanensis (strain LMG 19424)).